We begin with the raw amino-acid sequence, 341 residues long: Platelet-activating factor receptor (341 aa).

Over 1 to 16 the chain is Extracellular; sequence MEQNGSFRVDSEFRYT. The N-linked (GlcNAc...) asparagine glycan is linked to Asn4. A helical transmembrane segment spans residues 17 to 38; the sequence is LFPIVYSVIFVLGVVANGYVLW. The Cytoplasmic portion of the chain corresponds to 39 to 54; sequence VFATLYPSKKLNEIKI. A helical transmembrane segment spans residues 55 to 74; that stretch reads FMVNLTVADLLFLMTLPLWI. Topologically, residues 75–91 are extracellular; it reads VYYSNEGDWIVHKFLCN. Cysteines 90 and 173 form a disulfide. The chain crosses the membrane as a helical span at residues 92–113; that stretch reads LAGCLFFINTYCSVAFLGVITY. Topologically, residues 114 to 133 are cytoplasmic; it reads NRYQAVAYPIKTAQATTRKR. The helical transmembrane segment at 134–155 threads the bilayer; sequence GITLSLVIWISIAATASYFLAT. Residues 156-184 lie on the Extracellular side of the membrane; that stretch reads DSTNVVPKKDGSGNITRCFEHYEPYSVPI. An N-linked (GlcNAc...) asparagine glycan is attached at Asn169. The chain crosses the membrane as a helical span at residues 185–205; it reads LVVHIFITSCFFLVFFLIFYC. At 206-233 the chain is on the cytoplasmic side; that stretch reads NMVIIHTLLTRPVRQQRKPEVKRRALWM. The chain crosses the membrane as a helical span at residues 234–254; that stretch reads VCTVLAVFVICFVPHHVVQLP. The Extracellular segment spans residues 255-275; it reads WTLAELGYQTNFHQAINDAHQ. A helical transmembrane segment spans residues 276-295; the sequence is ITLCLLSTNCVLDPVIYCFL. Over 296–341 the chain is Cytoplasmic; sequence TKKFRKHLSEKFYSMRSSRKCSRATSDTCTEVMMPANQTPVLPLKN.

Belongs to the G-protein coupled receptor 1 family. As to quaternary structure, interacts with ARRB1. As to expression, present in almost all organs including spleen, small intestine, kidney, lung, liver and brain.

The protein resides in the cell membrane. In terms of biological role, receptor for platelet activating factor, a chemotactic phospholipid mediator that possesses potent inflammatory, smooth-muscle contractile and hypotensive activity. Seems to mediate its action via a G protein that activates a phosphatidylinositol-calcium second messenger system. This Rattus norvegicus (Rat) protein is Platelet-activating factor receptor (Ptafr).